Here is a 100-residue protein sequence, read N- to C-terminus: Urease subunit gamma (100 aa).

The protein belongs to the urease gamma subunit family. As to quaternary structure, heterotrimer of UreA (gamma), UreB (beta) and UreC (alpha) subunits. Three heterotrimers associate to form the active enzyme.

It is found in the cytoplasm. The catalysed reaction is urea + 2 H2O + H(+) = hydrogencarbonate + 2 NH4(+). It participates in nitrogen metabolism; urea degradation; CO(2) and NH(3) from urea (urease route): step 1/1. In Actinobacillus pleuropneumoniae (Haemophilus pleuropneumoniae), this protein is Urease subunit gamma.